A 303-amino-acid chain; its full sequence is Tyrosine recombinase XerC (303 aa).

Positions 3-89 (IQNDQWVSAF…TLRSFYQFLV (87 aa)) constitute a Core-binding (CB) domain. The 188-residue stretch at 110–297 (KLPSFLYEEE…TKDRLRDVYR (188 aa)) folds into the Tyr recombinase domain. Residues Arg-150, Lys-174, His-249, Arg-252, and His-275 contribute to the active site. The active-site O-(3'-phospho-DNA)-tyrosine intermediate is the Tyr-284.

It belongs to the 'phage' integrase family. XerC subfamily. Forms a cyclic heterotetrameric complex composed of two molecules of XerC and two molecules of XerD.

The protein localises to the cytoplasm. Site-specific tyrosine recombinase, which acts by catalyzing the cutting and rejoining of the recombining DNA molecules. The XerC-XerD complex is essential to convert dimers of the bacterial chromosome into monomers to permit their segregation at cell division. It also contributes to the segregational stability of plasmids. This chain is Tyrosine recombinase XerC, found in Halalkalibacterium halodurans (strain ATCC BAA-125 / DSM 18197 / FERM 7344 / JCM 9153 / C-125) (Bacillus halodurans).